A 548-amino-acid chain; its full sequence is MAQVINTNSLSLITQNNINKNQSALSSSIERLSSGLRINSAKDDAAGQAIANRFTSNIKGLTQAARNANDGISVAQTTEGALSEINNNLQRIRELTVQASTGTNSDSDLDSIQDEIKSRLDEIDRVSGQTQFNGVNVLAKDGSMKIQVGANDGQTITIDLKKIDSDTLGLNGFNVNGKGETANTAATLKDMSGFTAAAAPGGTVGVTQYTDKSAVASSVDILNAVAGADGNKVTTSADVGFGTPAAAVTYTYNKDTNSYSAASDDISSANLAAFLNPQARDTTKATVTIGGKDQDVNIDKSGNLTAADDGAVLYMDATGNLTKNNAGGDTQATLAKVATATGAKAATIQTDKGTFTSDGTAFDGASMSIDANTFANAVKNDTYTATVGAKTYSVTTGSAAADTAYMSNGVLSDTPPTYYAQADGSITTTEDAAAGKLVYKGSDGKLTTDTTSKAESTSDPLAALDDAISQIDKFRSSLGAVQNRLDSAVTNLNNTTTNLSEAQSRIQDADYATEVSNMSKAQIIQQAGNSVLAKANQVPQQVLSLLQG.

Belongs to the bacterial flagellin family.

It localises to the secreted. It is found in the bacterial flagellum. Its function is as follows. Flagellin is the subunit protein which polymerizes to form the filaments of bacterial flagella. This Escherichia coli O127:H6 (strain E2348/69 / EPEC) protein is Flagellin (fliC).